Reading from the N-terminus, the 396-residue chain is 1-deoxy-D-xylulose 5-phosphate reductoisomerase (396 aa).

Residues T10, G11, S12, I13, G36, K37, N38, and N124 each coordinate NADPH. Residue K125 coordinates 1-deoxy-D-xylulose 5-phosphate. NADPH is bound at residue E126. Position 150 (D150) interacts with Mn(2+). Residues S151, E152, S186, and H209 each coordinate 1-deoxy-D-xylulose 5-phosphate. Residue E152 coordinates Mn(2+). G215 provides a ligand contact to NADPH. 1-deoxy-D-xylulose 5-phosphate is bound by residues S222, N227, K228, and E231. Residue E231 participates in Mn(2+) binding.

This sequence belongs to the DXR family. It depends on Mg(2+) as a cofactor. The cofactor is Mn(2+).

It catalyses the reaction 2-C-methyl-D-erythritol 4-phosphate + NADP(+) = 1-deoxy-D-xylulose 5-phosphate + NADPH + H(+). Its pathway is isoprenoid biosynthesis; isopentenyl diphosphate biosynthesis via DXP pathway; isopentenyl diphosphate from 1-deoxy-D-xylulose 5-phosphate: step 1/6. In terms of biological role, catalyzes the NADPH-dependent rearrangement and reduction of 1-deoxy-D-xylulose-5-phosphate (DXP) to 2-C-methyl-D-erythritol 4-phosphate (MEP). The polypeptide is 1-deoxy-D-xylulose 5-phosphate reductoisomerase (Actinobacillus pleuropneumoniae serotype 5b (strain L20)).